The primary structure comprises 231 residues: Lipoprotein-releasing system ATP-binding protein LolD (231 aa).

Residues 6-230 enclose the ABC transporter domain; that stretch reads LSCKNVSKKY…DGELELVINS (225 aa). Position 42–49 (42–49) interacts with ATP; it reads GLSGSGKT.

This sequence belongs to the ABC transporter superfamily. Lipoprotein translocase (TC 3.A.1.125) family. In terms of assembly, the complex is composed of two ATP-binding proteins (LolD) and two transmembrane proteins (LolC and LolE).

It is found in the cell inner membrane. Part of the ABC transporter complex LolCDE involved in the translocation of mature outer membrane-directed lipoproteins, from the inner membrane to the periplasmic chaperone, LolA. Responsible for the formation of the LolA-lipoprotein complex in an ATP-dependent manner. The chain is Lipoprotein-releasing system ATP-binding protein LolD from Francisella tularensis subsp. tularensis (strain FSC 198).